A 121-amino-acid chain; its full sequence is Protransforming growth factor alpha (121 aa).

Leu1 is a signal peptide. Residues 2 to 16 (ENSTSLLSDPPVAAA) constitute a propeptide, removed in mature form. At 2-75 (ENSTSLLSDP…AVVAASQKKQ (74 aa)) the chain is on the extracellular side. N-linked (GlcNAc...) asparagine glycosylation is present at Asn3. Positions 20–60 (HFNDCPDSHTQFCFHGTCRFLVQEDRPACVCHSGYVGARCE) constitute an EGF-like domain. 3 cysteine pairs are disulfide-bonded: Cys24/Cys37, Cys32/Cys48, and Cys50/Cys59. The propeptide at 67-121 (VVAASQKKQAITALVVVSIVALAVLIITCVLIHCCQVRKHCEWCRALICRHEKPS) is removed in mature form. The chain crosses the membrane as a helical span at residues 76–101 (AITALVVVSIVALAVLIITCVLIHCC).

As to quaternary structure, interacts with the PDZ domains of MAGI3, SDCBP and SNTA1. The interaction with SDCBP, is required for the targeting to the cell surface. In the endoplasmic reticulum, in its immature form (i.e. with a prosegment and lacking full N-glycosylation), interacts with CNIH. In the Golgi apparatus, may form a complex with CNIH and GORASP2. Interacts (via cytoplasmic C-terminal domain) with NKD2. In terms of tissue distribution, hypothalamus.

The protein resides in the secreted. The protein localises to the extracellular space. It localises to the cell membrane. In terms of biological role, TGF alpha is a mitogenic polypeptide that is able to bind to the EGF receptor/EGFR and to act synergistically with TGF beta to promote anchorage-independent cell proliferation in soft agar. The polypeptide is Protransforming growth factor alpha (TGFA) (Macaca mulatta (Rhesus macaque)).